Consider the following 377-residue polypeptide: Succinyl-diaminopimelate desuccinylase (377 aa).

His-66 contributes to the Zn(2+) binding site. The active site involves Asp-68. Asp-99 lines the Zn(2+) pocket. The Proton acceptor role is filled by Glu-133. Residues Glu-134, Glu-162, and His-348 each coordinate Zn(2+).

The protein belongs to the peptidase M20A family. DapE subfamily. Homodimer. It depends on Zn(2+) as a cofactor. Co(2+) serves as cofactor.

It catalyses the reaction N-succinyl-(2S,6S)-2,6-diaminopimelate + H2O = (2S,6S)-2,6-diaminopimelate + succinate. It participates in amino-acid biosynthesis; L-lysine biosynthesis via DAP pathway; LL-2,6-diaminopimelate from (S)-tetrahydrodipicolinate (succinylase route): step 3/3. Its function is as follows. Catalyzes the hydrolysis of N-succinyl-L,L-diaminopimelic acid (SDAP), forming succinate and LL-2,6-diaminopimelate (DAP), an intermediate involved in the bacterial biosynthesis of lysine and meso-diaminopimelic acid, an essential component of bacterial cell walls. This chain is Succinyl-diaminopimelate desuccinylase, found in Histophilus somni (strain 129Pt) (Haemophilus somnus).